Consider the following 227-residue polypeptide: Cytochrome c oxidase subunit 2 (227 aa).

The Mitochondrial intermembrane segment spans residues M1–S14. The helical transmembrane segment at P15–M45 threads the bilayer. At L46–Q59 the chain is on the mitochondrial matrix side. Residues E60–M87 traverse the membrane as a helical segment. At D88 to S227 the chain is on the mitochondrial intermembrane side. Residues H161, C196, E198, C200, H204, and M207 each contribute to the Cu cation site. E198 serves as a coordination point for Mg(2+).

Belongs to the cytochrome c oxidase subunit 2 family. As to quaternary structure, component of the cytochrome c oxidase (complex IV, CIV), a multisubunit enzyme composed of 14 subunits. The complex is composed of a catalytic core of 3 subunits MT-CO1, MT-CO2 and MT-CO3, encoded in the mitochondrial DNA, and 11 supernumerary subunits COX4I, COX5A, COX5B, COX6A, COX6B, COX6C, COX7A, COX7B, COX7C, COX8 and NDUFA4, which are encoded in the nuclear genome. The complex exists as a monomer or a dimer and forms supercomplexes (SCs) in the inner mitochondrial membrane with NADH-ubiquinone oxidoreductase (complex I, CI) and ubiquinol-cytochrome c oxidoreductase (cytochrome b-c1 complex, complex III, CIII), resulting in different assemblies (supercomplex SCI(1)III(2)IV(1) and megacomplex MCI(2)III(2)IV(2)). Found in a complex with TMEM177, COA6, COX18, COX20, SCO1 and SCO2. Interacts with TMEM177 in a COX20-dependent manner. Interacts with COX20. Interacts with COX16. It depends on Cu cation as a cofactor.

The protein resides in the mitochondrion inner membrane. The enzyme catalyses 4 Fe(II)-[cytochrome c] + O2 + 8 H(+)(in) = 4 Fe(III)-[cytochrome c] + 2 H2O + 4 H(+)(out). Its function is as follows. Component of the cytochrome c oxidase, the last enzyme in the mitochondrial electron transport chain which drives oxidative phosphorylation. The respiratory chain contains 3 multisubunit complexes succinate dehydrogenase (complex II, CII), ubiquinol-cytochrome c oxidoreductase (cytochrome b-c1 complex, complex III, CIII) and cytochrome c oxidase (complex IV, CIV), that cooperate to transfer electrons derived from NADH and succinate to molecular oxygen, creating an electrochemical gradient over the inner membrane that drives transmembrane transport and the ATP synthase. Cytochrome c oxidase is the component of the respiratory chain that catalyzes the reduction of oxygen to water. Electrons originating from reduced cytochrome c in the intermembrane space (IMS) are transferred via the dinuclear copper A center (CU(A)) of subunit 2 and heme A of subunit 1 to the active site in subunit 1, a binuclear center (BNC) formed by heme A3 and copper B (CU(B)). The BNC reduces molecular oxygen to 2 water molecules using 4 electrons from cytochrome c in the IMS and 4 protons from the mitochondrial matrix. In Antilocapra americana (Pronghorn), this protein is Cytochrome c oxidase subunit 2 (MT-CO2).